Here is a 158-residue protein sequence, read N- to C-terminus: Glutathione peroxidase-like peroxiredoxin gpx1 (158 aa).

C36 functions as the Cysteine sulfenic acid (-SOH) intermediate in the catalytic mechanism. C36 and C82 form a disulfide bridge.

The protein belongs to the glutathione peroxidase family. As to quaternary structure, monomer.

It is found in the cytoplasm. It localises to the mitochondrion. The enzyme catalyses a hydroperoxide + [thioredoxin]-dithiol = an alcohol + [thioredoxin]-disulfide + H2O. Functionally, glutathione peroxidase-like protein that protects cells during oxidative stress. Has peroxidase activity reducing hydrogen peroxide, alkyl and phospholipid hydroperoxides using preferentially thioredoxin as a reducing power. May act as a scavenger of H(2)O(2). This chain is Glutathione peroxidase-like peroxiredoxin gpx1, found in Schizosaccharomyces pombe (strain 972 / ATCC 24843) (Fission yeast).